A 177-amino-acid polypeptide reads, in one-letter code: Novel acetylcholine receptor chaperone (177 aa).

Topologically, residues 1 to 5 are cytoplasmic; sequence MASPR. A helical transmembrane segment spans residues 6 to 26; it reads TVTVVALSVALGLFFVFMGTI. At 27–61 the chain is on the lumenal side; it reads KLTPRLSKDAYSEMKRAYKSYVRALPLLKKMGINS. The interval 43 to 54 is interaction with NGFR; sequence AYKSYVRALPLL. A helical transmembrane segment spans residues 62–82; sequence ILLRKSIGALEVACGIVMTLV. The Cytoplasmic segment spans residues 83-88; the sequence is PGRPKD. The chain crosses the membrane as a helical span at residues 89 to 109; the sequence is VANFFLLLLVLAVLFFHQLVG. The Lumenal portion of the chain corresponds to 110–114; it reads DPLKR. Residues 115 to 132 traverse the membrane as a helical segment; the sequence is YAHALVFGILLTCRLLIA. Over 133-177 the chain is Cytoplasmic; the sequence is RKPEDRSSEKKSSPPGNAGSDGNAGNTEEQPSLYEKAPQGKMKLS. The disordered stretch occupies residues 136–177; that stretch reads EDRSSEKKSSPPGNAGSDGNAGNTEEQPSLYEKAPQGKMKLS.

It belongs to the DoxX family. As to quaternary structure, may interact with NGFR. Interacts with RPN1, RPN2 and CANX.

The protein resides in the peroxisome membrane. It is found in the cytoplasmic vesicle. It localises to the endoplasmic reticulum membrane. In terms of biological role, molecular chaperone which mediates the proper assembly and functional expression of the nicotinic acetylcholine receptors (nAChRs) throughout the brain. Essential for the proper folding, assembly, function and surface trafficking of alpha-7 (CHRNA7), alpha-4-beta-2, alpha-3-beta-2 and alpha-3-beta-4 receptors. Stably associates with ribophorin-1 (RPN1) and ribophorin-2 (RPN2) (components of the oligosaccharyl transferase (OST) complex) and with calnexin (CANX), both of which are critical for NACHO-mediated effects on CHRNA7 assembly and function. Facilitates the proper folding and assembly of alpha-6-beta-2 and alpha-6-beta-2-beta-3 receptors and acts at early stages of the nAChRs subunit assembly. Promotes the expression of the alpha-4(2):beta-2(3) stoichiometric form over the alpha-4(3):beta-2(2) form. The polypeptide is Novel acetylcholine receptor chaperone (TMEM35A) (Bos taurus (Bovine)).